The primary structure comprises 781 residues: uncharacterized protein (781 aa).

Residues 1–34 (MNIAEEPSDEVISSGPEDTDICSQQTSASAEAGD) are disordered. At Ser-29 the chain carries Phosphoserine. 2 RRM domains span residues 195-273 (GNIF…YHVE) and 295-418 (RCLF…KAVQ). Residues 345-375 (SNTRSSSSVSFNEEGSVESNKSSNNTNGNAQ) are disordered. Residues 347-364 (TRSSSSVSFNEEGSVESN) show a composition bias toward low complexity. Polar residues predominate over residues 365 to 374 (KSSNNTNGNA). 4 positions are modified to phosphoserine: Ser-433, Ser-435, Ser-482, and Ser-485. At Thr-486 the chain carries Phosphothreonine. At Ser-501 the chain carries Phosphoserine. The region spanning 540–638 (SNLYVKHIPL…QVLSVSFAQK (99 aa)) is the RRM 3 domain. The disordered stretch occupies residues 640–668 (GNLSSSDDDDQSQTDNSSKFQNFQPHNDY).

As to quaternary structure, interacts with RBG1.

This is an uncharacterized protein from Saccharomyces cerevisiae (strain ATCC 204508 / S288c) (Baker's yeast).